Here is a 525-residue protein sequence, read N- to C-terminus: MLRTILDAPQRLLKEGRASRQLVLVVVFVALLLDNMLFTVVVPIVPTFLYDMEFKEVNSSLHLGHAGSSPHALASPAFSTIFSFFNNNTVAVEESVPSGIAWMNDTASTIPPPATEAISAHKNNCLQGTGFLEEEITRVGVLFASKAVMQLLVNPFVGPLTNRIGYHIPMFAGFVIMFLSTVMFAFSGTYTLLFVARTLQGIGSSFSSVAGLGMLASVYTDDHERGRAMGTALGGLALGLLVGAPFGSVMYEFVGKSAPFLILAFLALLDGALQLCILQPSKVSPESAKGTPLFMLLKDPYILVAAGSICFANMGVAILEPTLPIWMMQTMCSPKWQLGLAFLPASVSYLIGTNLFGVLANKMGRWLCSLIGMLVVGTSLLCVPLAHNIFGLIGPNAGLGLAIGMVDSSMMPIMGHLVDLRHTSVYGSVYAIADVAFCMGFAIGPSTGGAIVKAIGFPWLMVITGVINIVYAPLCYYLRSPPAKEEKLAILSQDCPMETRMYATQKPTKEFPLGEDSDEEPDHEE.

The Cytoplasmic segment spans residues 1 to 21; that stretch reads MLRTILDAPQRLLKEGRASRQ. The helical transmembrane segment at 22 to 42 threads the bilayer; that stretch reads LVLVVVFVALLLDNMLFTVVV. Topologically, residues 43 to 138 are lumenal, vesicle; sequence PIVPTFLYDM…TGFLEEEITR (96 aa). Residues asparagine 58, asparagine 87, and asparagine 104 are each glycosylated (N-linked (GlcNAc...) asparagine). Residues 139–158 traverse the membrane as a helical segment; sequence VGVLFASKAVMQLLVNPFVG. Residues 159 to 167 lie on the Cytoplasmic side of the membrane; it reads PLTNRIGYH. Residues 168–188 form a helical membrane-spanning segment; sequence IPMFAGFVIMFLSTVMFAFSG. At 189-197 the chain is on the lumenal, vesicle side; the sequence is TYTLLFVAR. The helical transmembrane segment at 198-218 threads the bilayer; it reads TLQGIGSSFSSVAGLGMLASV. Residues 219 to 227 are Cytoplasmic-facing; it reads YTDDHERGR. Residues 228 to 250 traverse the membrane as a helical segment; that stretch reads AMGTALGGLALGLLVGAPFGSVM. Residues 251-256 lie on the Lumenal, vesicle side of the membrane; it reads YEFVGK. The helical transmembrane segment at 257–279 threads the bilayer; that stretch reads SAPFLILAFLALLDGALQLCILQ. The Cytoplasmic segment spans residues 280–299; that stretch reads PSKVSPESAKGTPLFMLLKD. Residues 300-319 form a helical membrane-spanning segment; sequence PYILVAAGSICFANMGVAIL. Topologically, residues 320 to 335 are lumenal, vesicle; it reads EPTLPIWMMQTMCSPK. The helical transmembrane segment at 336–360 threads the bilayer; the sequence is WQLGLAFLPASVSYLIGTNLFGVLA. Over 361-365 the chain is Cytoplasmic; it reads NKMGR. A helical membrane pass occupies residues 366–386; it reads WLCSLIGMLVVGTSLLCVPLA. Residues 387–397 are Lumenal, vesicle-facing; that stretch reads HNIFGLIGPNA. A helical membrane pass occupies residues 398–418; it reads GLGLAIGMVDSSMMPIMGHLV. At 419–422 the chain is on the cytoplasmic side; that stretch reads DLRH. Residues 423-443 traverse the membrane as a helical segment; it reads TSVYGSVYAIADVAFCMGFAI. The Lumenal, vesicle portion of the chain corresponds to 444–448; sequence GPSTG. Residues 449–470 traverse the membrane as a helical segment; the sequence is GAIVKAIGFPWLMVITGVINIV. Topologically, residues 471–525 are cytoplasmic; that stretch reads YAPLCYYLRSPPAKEEKLAILSQDCPMETRMYATQKPTKEFPLGEDSDEEPDHEE. The tract at residues 503–525 is disordered; the sequence is ATQKPTKEFPLGEDSDEEPDHEE. Acidic residues predominate over residues 513–525; the sequence is LGEDSDEEPDHEE.

The protein belongs to the major facilitator superfamily. Vesicular transporter family. Expressed primarily in neuroendocrine tissues. Highly expressed in chromaffin cells of the adrenal medulla (at protein level). Detected in peripheral sympathetic ganglia (at protein level). Found in some paracrine cells in stomach and duodenum (at protein level). Expressed in substantia nigra. As to expression, expressed in gastrointestinal tract.

The protein localises to the cytoplasmic vesicle. It localises to the secretory vesicle membrane. It is found in the secretory vesicle. Its subcellular location is the synaptic vesicle membrane. The protein resides in the endoplasmic reticulum membrane. It carries out the reaction serotonin(in) + 2 H(+)(out) = serotonin(out) + 2 H(+)(in). The catalysed reaction is (R)-noradrenaline(in) + 2 H(+)(out) = (R)-noradrenaline(out) + 2 H(+)(in). It catalyses the reaction dopamine(in) + 2 H(+)(out) = dopamine(out) + 2 H(+)(in). Its activity is regulated as follows. Strongly inhibited by reserpine. Also inhibited to a lesser extent by ketanserin and fenfluramine. Not significantly inhibited by tetrabenazine. Functionally, electrogenic antiporter that exchanges one cationic monoamine with two intravesicular protons across the membrane of secretory and synaptic vesicles. Uses the electrochemical proton gradient established by the V-type proton-pump ATPase to accumulate high concentrations of monoamines inside the vesicles prior to their release via exocytosis. Transports catecholamines and indolamines with higher affinity for serotonin. Regulates the transvesicular monoaminergic gradient that determines the quantal size. Mediates presynaptic monoaminergic vesicle transport in the amygdala and prefrontal brain regions related with emotion processing in response to environmental stimuli. Its function is as follows. Unable to uptake serotonin. This Homo sapiens (Human) protein is Chromaffin granule amine transporter (SLC18A1).